The primary structure comprises 211 residues: Imidazole glycerol phosphate synthase subunit HisH (211 aa).

Residues 1–206 (MIGIIDYGRG…GKWVNEDATV (206 aa)) enclose the Glutamine amidotransferase type-1 domain. C79 (nucleophile) is an active-site residue. Residues H181 and E183 contribute to the active site.

As to quaternary structure, heterodimer of HisH and HisF.

Its subcellular location is the cytoplasm. The catalysed reaction is 5-[(5-phospho-1-deoxy-D-ribulos-1-ylimino)methylamino]-1-(5-phospho-beta-D-ribosyl)imidazole-4-carboxamide + L-glutamine = D-erythro-1-(imidazol-4-yl)glycerol 3-phosphate + 5-amino-1-(5-phospho-beta-D-ribosyl)imidazole-4-carboxamide + L-glutamate + H(+). It catalyses the reaction L-glutamine + H2O = L-glutamate + NH4(+). Its pathway is amino-acid biosynthesis; L-histidine biosynthesis; L-histidine from 5-phospho-alpha-D-ribose 1-diphosphate: step 5/9. IGPS catalyzes the conversion of PRFAR and glutamine to IGP, AICAR and glutamate. The HisH subunit catalyzes the hydrolysis of glutamine to glutamate and ammonia as part of the synthesis of IGP and AICAR. The resulting ammonia molecule is channeled to the active site of HisF. This Desulfitobacterium hafniense (strain Y51) protein is Imidazole glycerol phosphate synthase subunit HisH.